Here is a 267-residue protein sequence, read N- to C-terminus: Mitochondrial S-adenosylmethionine carrier protein (267 aa).

Solcar repeat units follow at residues 4-77 (REFT…TKSV), 86-168 (LAPI…LKAV), and 177-265 (LDSW…VRRT). 6 helical membrane-spanning segments follow: residues 5 to 25 (EFTA…LTLF), 49 to 69 (IYAG…AFFV), 85 to 105 (NLAP…ACLI), 142 to 162 (RGYG…FPLW), 182 to 202 (AAVC…PLDV), and 238 to 258 (FAGS…FLGA).

It belongs to the mitochondrial carrier (TC 2.A.29) family.

The protein resides in the mitochondrion inner membrane. The catalysed reaction is S-adenosyl-L-homocysteine(out) + S-adenosyl-L-methionine(in) = S-adenosyl-L-homocysteine(in) + S-adenosyl-L-methionine(out). Its function is as follows. Mitochondrial S-adenosyl-L-methionine/S-adenosyl-L-homocysteine antiporter. Mediates the exchange of cytosolic S-adenosyl-L-methionine, the predominant methyl-group donor for macromolecule methylation processes, for mitochondrial S-adenosylhomocysteine(SAH), a by-product of methylation reactions. This is Mitochondrial S-adenosylmethionine carrier protein (slc25a26) from Danio rerio (Zebrafish).